The primary structure comprises 101 residues: Urease subunit beta (101 aa).

Belongs to the urease beta subunit family. As to quaternary structure, heterotrimer of UreA (gamma), UreB (beta) and UreC (alpha) subunits. Three heterotrimers associate to form the active enzyme.

It localises to the cytoplasm. The enzyme catalyses urea + 2 H2O + H(+) = hydrogencarbonate + 2 NH4(+). It functions in the pathway nitrogen metabolism; urea degradation; CO(2) and NH(3) from urea (urease route): step 1/1. The protein is Urease subunit beta of Thermosynechococcus vestitus (strain NIES-2133 / IAM M-273 / BP-1).